Here is a 205-residue protein sequence, read N- to C-terminus: Ribosomal RNA small subunit methyltransferase G (205 aa).

Residues Gly66, Phe71, 119 to 120 (IE), and Arg135 contribute to the S-adenosyl-L-methionine site.

Belongs to the methyltransferase superfamily. RNA methyltransferase RsmG family.

It localises to the cytoplasm. It carries out the reaction guanosine(527) in 16S rRNA + S-adenosyl-L-methionine = N(7)-methylguanosine(527) in 16S rRNA + S-adenosyl-L-homocysteine. Functionally, specifically methylates the N7 position of guanine in position 527 of 16S rRNA. In Rhizobium etli (strain CIAT 652), this protein is Ribosomal RNA small subunit methyltransferase G.